The following is a 217-amino-acid chain: Lectin ADEL (217 aa).

Disulfide bonds link Cys-5–Cys-187, Cys-42–Cys-68, Cys-61–Cys-77, Cys-114–Cys-135, and Cys-142–Cys-206. An N-linked (GlcNAc...) asparagine glycan is attached at Asn-30. N-linked (GlcNAc...) asparagine glycosylation is found at Asn-102 and Asn-126.

In terms of assembly, homodimer; disulfide-linked. Contains disulfide bonds.

Its function is as follows. Binds in decreasing order of affinity: galacturonic acid, D-galactosamine, methyl-alpha-D-galactopyranoside and further galactose-containing carbohydrates. Has hemagglutinating activity against human and rabbit erythrocytes. This chain is Lectin ADEL, found in Aplysia dactylomela (Spotted sea hare).